The chain runs to 150 residues: HTH-type transcriptional regulator LrpA (150 aa).

In terms of domain architecture, HTH asnC-type spans 5–66 (LDDIDRILVR…RINPEAVGHL (62 aa)). The segment at residues 24-43 (LSELATRAGLSVSAVQSRVR) is a DNA-binding region (H-T-H motif). Positions 100, 102, and 104 each coordinate L-phenylalanine.

Homohexadecamer in the absence of any added ligand. Homooctamer. Tetramer of dimers. In the presence of phenylalanine, the hexadecamer dissociates into an octamer, which further dissociates partially into lower-order oligomers.

The DNA-binding activity of LrpA is modulated by interaction of LrpA with various effector molecules, including amino acids and vitamins. The DNA binding affinity is decreased by several amino acids, including phenylalanine, tyrosine, tryptophan, histidine, leucine and aspartate. Preferentially binds to aromatic amino acids. Besides amino acids, the binding affinity is also reduced by vitamins, including B1, B3, B6, VC, B7, B9, B12, VA and VK3. Its function is as follows. Transcriptional regulator that probably plays an important role in M.tuberculosis persistence. Regulates the expression of several genes, including lat, rsmG, whiB2, lsr2 and Rv2011c. Acts by binding directly to the promoter region of the target genes. This Mycobacterium tuberculosis (strain ATCC 25618 / H37Rv) protein is HTH-type transcriptional regulator LrpA.